Here is a 228-residue protein sequence, read N- to C-terminus: uncharacterized protein (228 aa).

This sequence to E.coli YbfG.

This is an uncharacterized protein from Haemophilus influenzae (strain ATCC 51907 / DSM 11121 / KW20 / Rd).